We begin with the raw amino-acid sequence, 259 residues long: Hydroxyacylglutathione hydrolase (259 aa).

Residues H56, H58, D60, H61, H112, D133, and H171 each coordinate Zn(2+).

The protein belongs to the metallo-beta-lactamase superfamily. Glyoxalase II family. In terms of assembly, monomer. Zn(2+) is required as a cofactor.

The catalysed reaction is an S-(2-hydroxyacyl)glutathione + H2O = a 2-hydroxy carboxylate + glutathione + H(+). It participates in secondary metabolite metabolism; methylglyoxal degradation; (R)-lactate from methylglyoxal: step 2/2. Thiolesterase that catalyzes the hydrolysis of S-D-lactoyl-glutathione to form glutathione and D-lactic acid. In Pseudomonas putida (strain ATCC 700007 / DSM 6899 / JCM 31910 / BCRC 17059 / LMG 24140 / F1), this protein is Hydroxyacylglutathione hydrolase.